The sequence spans 194 residues: Archaetidylinositol phosphate synthase (194 aa).

2 consecutive transmembrane segments (helical) span residues 32–51 (IYTL…WLYI) and 58–78 (LLIA…RFTG). Residues aspartate 67, aspartate 70, aspartate 88, and aspartate 92 each contribute to the Mg(2+) site. Aspartate 92 serves as the catalytic Proton acceptor. Transmembrane regions (helical) follow at residues 103–123 (LYIA…GLIV), 150–170 (IAIL…LALA), and 172–192 (AAAV…AGEL).

It belongs to the CDP-alcohol phosphatidyltransferase class-I family. The cofactor is Mn(2+). It depends on Mg(2+) as a cofactor.

Its subcellular location is the cell membrane. It carries out the reaction CDP-2,3-bis-O-(phytanyl)-sn-glycerol + 1D-myo-inositol 3-phosphate = saturated 1-archaetidyl-1D-myo-inositol 3-phosphate + CMP + H(+). It participates in lipid metabolism; phospholipid metabolism. Catalyzes the formation of archaetidylinositol phosphate (AIP) from CDP-archaeol (CDP-ArOH or CDP-2,3-bis-(O-phytanyl)-sn-glycerol) and 1L-myo-inositol 1-phosphate (IP or 1D-myo-inositol 3-phosphate). AIP is a precursor of archaetidyl-myo-inositol (AI), an ether-type inositol phospholipid ubiquitously distributed in archaea membranes and essential for glycolipid biosynthesis in archaea. The protein is Archaetidylinositol phosphate synthase of Aeropyrum pernix (strain ATCC 700893 / DSM 11879 / JCM 9820 / NBRC 100138 / K1).